The sequence spans 433 residues: Deoxyguanosinetriphosphate triphosphohydrolase-like protein 2 (433 aa).

Residues 61–248 (RLTHSLEVAQ…METADDIAYT (188 aa)) form the HD domain.

This sequence belongs to the dGTPase family. Type 2 subfamily.

This Deinococcus radiodurans (strain ATCC 13939 / DSM 20539 / JCM 16871 / CCUG 27074 / LMG 4051 / NBRC 15346 / NCIMB 9279 / VKM B-1422 / R1) protein is Deoxyguanosinetriphosphate triphosphohydrolase-like protein 2.